Here is a 107-residue protein sequence, read N- to C-terminus: MSIRRAMSTTASKEWRDYFMSTHFWGPVANWGIPVAALADTQKSPKFISGKMTLALTLYSCIFMRFAYKVQPRNWLLFACHATNATAQSIQGLRFLHYNYGSKEQQA.

Helical transmembrane passes span 18 to 39 and 52 to 68; these read YFMSTHFWGPVANWGIPVAALA and MTLALTLYSCIFMRFAY.

It belongs to the mitochondrial pyruvate carrier (MPC) (TC 2.A.105) family. In terms of assembly, the functional 150 kDa pyruvate import complex is a heteromer of MPC1 and MPC2.

The protein localises to the mitochondrion inner membrane. Mediates the uptake of pyruvate into mitochondria. The protein is Mitochondrial pyruvate carrier 1 (Mpc1) of Drosophila melanogaster (Fruit fly).